Here is a 302-residue protein sequence, read N- to C-terminus: Aspartate carbamoyltransferase catalytic subunit (302 aa).

Positions 55 and 56 each coordinate carbamoyl phosphate. Residue K83 participates in L-aspartate binding. Carbamoyl phosphate contacts are provided by R105, H133, and Q136. Positions 166 and 222 each coordinate L-aspartate. Carbamoyl phosphate is bound by residues G262 and P263.

It belongs to the aspartate/ornithine carbamoyltransferase superfamily. ATCase family. In terms of assembly, heterododecamer (2C3:3R2) of six catalytic PyrB chains organized as two trimers (C3), and six regulatory PyrI chains organized as three dimers (R2).

It carries out the reaction carbamoyl phosphate + L-aspartate = N-carbamoyl-L-aspartate + phosphate + H(+). Its pathway is pyrimidine metabolism; UMP biosynthesis via de novo pathway; (S)-dihydroorotate from bicarbonate: step 2/3. Functionally, catalyzes the condensation of carbamoyl phosphate and aspartate to form carbamoyl aspartate and inorganic phosphate, the committed step in the de novo pyrimidine nucleotide biosynthesis pathway. This is Aspartate carbamoyltransferase catalytic subunit from Solibacter usitatus (strain Ellin6076).